Here is a 105-residue protein sequence, read N- to C-terminus: Small ribosomal subunit protein eS10A (105 aa).

It belongs to the eukaryotic ribosomal protein eS10 family. As to quaternary structure, component of the small ribosomal subunit (SSU). Mature yeast ribosomes consist of a small (40S) and a large (60S) subunit. The 40S small subunit contains 1 molecule of ribosomal RNA (18S rRNA) and 33 different proteins (encoded by 57 genes). The large 60S subunit contains 3 rRNA molecules (25S, 5.8S and 5S rRNA) and 46 different proteins (encoded by 81 genes). eS10 interacts with GCN1 (via middle region); this interaction is direct and promotes GCN2 kinase activity. In terms of processing, the N-terminus is not modified.

It is found in the cytoplasm. In terms of biological role, component of the ribosome, a large ribonucleoprotein complex responsible for the synthesis of proteins in the cell. The small ribosomal subunit (SSU) binds messenger RNAs (mRNAs) and translates the encoded message by selecting cognate aminoacyl-transfer RNA (tRNA) molecules. The large subunit (LSU) contains the ribosomal catalytic site termed the peptidyl transferase center (PTC), which catalyzes the formation of peptide bonds, thereby polymerizing the amino acids delivered by tRNAs into a polypeptide chain. The nascent polypeptides leave the ribosome through a tunnel in the LSU and interact with protein factors that function in enzymatic processing, targeting, and the membrane insertion of nascent chains at the exit of the ribosomal tunnel. eS10 plays a role as a positive regulator of the GCN2 kinase activity by stimulating GCN1-mediated GCN2 activation. The sequence is that of Small ribosomal subunit protein eS10A from Saccharomyces cerevisiae (strain ATCC 204508 / S288c) (Baker's yeast).